Here is a 159-residue protein sequence, read N- to C-terminus: 6,7-dimethyl-8-ribityllumazine synthase (159 aa).

Residues phenylalanine 22, 57 to 59 (AVE), and 81 to 83 (AVI) contribute to the 5-amino-6-(D-ribitylamino)uracil site. Residue 86 to 87 (GT) coordinates (2S)-2-hydroxy-3-oxobutyl phosphate. Histidine 89 acts as the Proton donor in catalysis. A 5-amino-6-(D-ribitylamino)uracil-binding site is contributed by phenylalanine 114. Arginine 128 contributes to the (2S)-2-hydroxy-3-oxobutyl phosphate binding site.

Belongs to the DMRL synthase family. As to quaternary structure, forms an icosahedral capsid composed of 60 subunits, arranged as a dodecamer of pentamers.

The catalysed reaction is (2S)-2-hydroxy-3-oxobutyl phosphate + 5-amino-6-(D-ribitylamino)uracil = 6,7-dimethyl-8-(1-D-ribityl)lumazine + phosphate + 2 H2O + H(+). It functions in the pathway cofactor biosynthesis; riboflavin biosynthesis; riboflavin from 2-hydroxy-3-oxobutyl phosphate and 5-amino-6-(D-ribitylamino)uracil: step 1/2. Catalyzes the formation of 6,7-dimethyl-8-ribityllumazine by condensation of 5-amino-6-(D-ribitylamino)uracil with 3,4-dihydroxy-2-butanone 4-phosphate. This is the penultimate step in the biosynthesis of riboflavin. This Shewanella denitrificans (strain OS217 / ATCC BAA-1090 / DSM 15013) protein is 6,7-dimethyl-8-ribityllumazine synthase.